The following is a 317-amino-acid chain: MKALWVALVVTLLAGCRAEVEPEPEPEVQLGQEQPEWQGSQPWELALGRLWDYLRWVQTLSDQVQEELLSTQVTQELTALMEETMKEVKAYKAELEEQLSPVAQETRARLSKELQAAQARLGTDMEDLRSRLAHYRNEVQAMLGQTTDELRNRLASHLRKLRKRLLRDAEDLQKRLAVYRAGAVEGAERSVSALRERLGPLVEQGRLGTATTSTLGSQPLRERAEAWGQKLRGRLEAVGARAQDRLDKMREQLEEVRAKVEEQASQMRLQAETFQARLKGWFQPLVEDLQRQWAGLVEKVQQLAVGTTPTPAASKNQ.

An N-terminal signal peptide occupies residues 1–18 (MKALWVALVVTLLAGCRA). Tandem repeats lie at residues 79–100 (ALME…EQLS), 101–122 (PVAQ…ARLG), 123–144 (TDME…AMLG), 145–166 (QTTD…KRLL), 167–188 (RDAE…EGAE), 189–210 (RSVS…LGTA), 211–232 (TTST…QKLR), and 233–254 (GRLE…EQLE). The 8 X 22 AA approximate tandem repeats stretch occupies residues 79–254 (ALMEETMKEV…RLDKMREQLE (176 aa)). A Methionine sulfoxide modification is found at Met-142. The interval 157–167 (HLRKLRKRLLR) is LDL and other lipoprotein receptors binding. 161–164 (LRKR) lines the heparin pocket. Residues 209-289 (TATTSTLGSQ…GWFQPLVEDL (81 aa)) are lipid-binding and lipoprotein association. The O-linked (GalNAc...) threonine glycan is linked to Thr-211. 228 to 235 (GQKLRGRL) serves as a coordination point for heparin. Residues 265–317 (SQMRLQAETFQARLKGWFQPLVEDLQRQWAGLVEKVQQLAVGTTPTPAASKNQ) are homooligomerization. The tract at residues 277 to 289 (RLKGWFQPLVEDL) is specificity for association with VLDL. A glycan (O-linked (GalNAc...) threonine) is linked at Thr-310.

The protein belongs to the apolipoprotein A1/A4/E family. Homotetramer. May interact with ABCA1; functionally associated with ABCA1 in the biogenesis of HDLs. May interact with APP/A4 amyloid-beta peptide; the interaction is extremely stable in vitro but its physiological significance is unclear. May interact with MAPT. May interact with MAP2. In the cerebrospinal fluid, interacts with secreted SORL1. Interacts with PMEL; this allows the loading of PMEL luminal fragment on ILVs to induce fibril nucleation. APOE exists as multiple glycosylated and sialylated glycoforms within cells and in plasma. The extent of glycosylation and sialylation are tissue and context specific. Post-translationally, glycated in plasma VLDL. In terms of processing, phosphorylated by FAM20C in the extracellular medium.

The protein resides in the secreted. It is found in the extracellular space. Its subcellular location is the extracellular matrix. The protein localises to the extracellular vesicle. It localises to the endosome. The protein resides in the multivesicular body. Functionally, APOE is an apolipoprotein, a protein associating with lipid particles, that mainly functions in lipoprotein-mediated lipid transport between organs via the plasma and interstitial fluids. APOE is a core component of plasma lipoproteins and is involved in their production, conversion and clearance. Apolipoproteins are amphipathic molecules that interact both with lipids of the lipoprotein particle core and the aqueous environment of the plasma. As such, APOE associates with chylomicrons, chylomicron remnants, very low density lipoproteins (VLDL) and intermediate density lipoproteins (IDL) but shows a preferential binding to high-density lipoproteins (HDL). It also binds a wide range of cellular receptors including the LDL receptor/LDLR and the very low-density lipoprotein receptor/VLDLR that mediate the cellular uptake of the APOE-containing lipoprotein particles. Finally, APOE also has a heparin-binding activity and binds heparan-sulfate proteoglycans on the surface of cells, a property that supports the capture and the receptor-mediated uptake of APOE-containing lipoproteins by cells. The polypeptide is Apolipoprotein E (APOE) (Camelus dromedarius (Dromedary)).